The following is a 138-amino-acid chain: MRTLWIVAVLLLGVEGSLVQFETLIMKIAGRSGLLWYSAYGCYCGWGGHGLPQDATDRCCFVHDCCYGKATDCNPKTVSYTYSEENGEIVCGGDNPCGTQICECDKAAAICFRDNIPSYSNKYWLFLPKNCRGDPEPC.

The N-terminal stretch at 1–16 (MRTLWIVAVLLLGVEG) is a signal peptide. 7 cysteine pairs are disulfide-bonded: Cys-42-Cys-131, Cys-44-Cys-60, Cys-59-Cys-111, Cys-65-Cys-138, Cys-66-Cys-104, Cys-73-Cys-97, and Cys-91-Cys-102. Residues Tyr-43, Gly-45, and Gly-47 each contribute to the Ca(2+) site. Residue His-63 is part of the active site. Asp-64 is a Ca(2+) binding site. Asp-105 is an active-site residue.

This sequence belongs to the phospholipase A2 family. Group II subfamily. D49 sub-subfamily. Requires Ca(2+) as cofactor. As to expression, expressed by the venom gland.

It localises to the secreted. It carries out the reaction a 1,2-diacyl-sn-glycero-3-phosphocholine + H2O = a 1-acyl-sn-glycero-3-phosphocholine + a fatty acid + H(+). Functionally, snake venom phospholipase A2 (PLA2) that significantly inhibits ADP-induced platelet aggregation in platelet-rich plasma of human, rabbit and guinea pig. PLA2 catalyzes the calcium-dependent hydrolysis of the 2-acyl groups in 3-sn-phosphoglycerides. This Crotalus viridis viridis (Prairie rattlesnake) protein is Acidic phospholipase A2 Cvv-E6a.